We begin with the raw amino-acid sequence, 193 residues long: p53 apoptosis effector related to PMP-22 (193 aa).

A run of 4 helical transmembrane segments spans residues 12-32 (RWILPLLLLSAIAFDIIALAG), 81-101 (LFCGFIILCICFILSFFALCG), 110-130 (VIGGLLALAAIFQIISLVIYP), and 151-171 (WAYGFGWAATIILIGCSFFFC).

The protein belongs to the TMEM47 family. As to expression, expressed in the stratified squamous skin epithelium of the skin and the tongue, but not in simple epithelia (at protein level). Expressed in the oral epithelium, tongue epithelium and skin (at protein level). More abundant in areas of lower flow stress in the inner curvature compared to the outer curvature regions of the aorta (at protein level). Expressed in luminal cells and myoepithelium cells of the mammary epithelium (at protein level). Expression increases during the early stages of pregnancy before decreasing before birth, expression continues to be weak during involution which mirrors decreased desmosome abundance and organization at these time points (at protein level). Expressed by epithelial cells at the mucosal surface in the proximal colon (at protein level). Expressed in apoptotic cells.

It localises to the cell junction. The protein resides in the desmosome. Its subcellular location is the cell membrane. The protein localises to the cytoplasm. Functionally, component of intercellular desmosome junctions. Plays a role in stratified epithelial integrity and cell-cell adhesion by promoting desmosome assembly. Thereby plays a role in barrier function of the skin against infection. Plays a role in mammary epithelial tissue homeostasis and remodeling during and after pregnancy, potentially via its involvement in desmosome cell-cell junctions. Required for tooth enamel development via facilitating desmosome-mediated ameloblast adhesion to the stratum intermedium during the transitional stage of amelogenesis. May also play a role in downstream transcriptional regulation of other genes involved in amelogenesis such as AMBN, ENAM, MMP20 and KLK4. Plays a role as an effector in the TP53-dependent apoptotic pathway. Positively regulates apoptosis in T-helper 17 (Th17) cell populations via caspase-dependent signaling. Promotes neutrophil transepithelial migration in response to chemoattractants such as hepoxilin A3 (HXA3), N-Formylmethionyl-leucyl-phenylalanine (fMLP) and CXCL8/IL-8. May act as a positive regulator of endothelial cell apoptosis in response to blood flow-derived shear stress. The chain is p53 apoptosis effector related to PMP-22 from Mus musculus (Mouse).